A 447-amino-acid polypeptide reads, in one-letter code: Xylose isomerase (447 aa).

Residues His102 and Asp105 contribute to the active site. Mg(2+) is bound by residues Glu233, Glu269, His272, Asp297, Asp308, Asp310, and Asp340.

It belongs to the xylose isomerase family. In terms of assembly, homotetramer. The cofactor is Mg(2+).

It is found in the cytoplasm. It catalyses the reaction alpha-D-xylose = alpha-D-xylulofuranose. The chain is Xylose isomerase from Pediococcus pentosaceus (strain ATCC 25745 / CCUG 21536 / LMG 10740 / 183-1w).